The following is a 203-amino-acid chain: Recombination protein RecR (203 aa).

The C4-type zinc-finger motif lies at 56–71 (CSVCGNVSDEERCRIC). Residues 79–179 (SLVCVVEEPK…TVTRIASGLP (101 aa)) form the Toprim domain.

This sequence belongs to the RecR family.

Functionally, may play a role in DNA repair. It seems to be involved in an RecBC-independent recombinational process of DNA repair. It may act with RecF and RecO. The chain is Recombination protein RecR from Mycolicibacterium smegmatis (strain ATCC 700084 / mc(2)155) (Mycobacterium smegmatis).